Reading from the N-terminus, the 1783-residue chain is Chitin synthase A (1783 aa).

N-linked (GlcNAc...) asparagine glycosylation is found at Asn-159, Asn-637, Asn-652, Asn-664, and Asn-669. The next 2 membrane-spanning stretches (helical) occupy residues 745-765 (IWVA…LSFV) and 781-801 (LTLV…IVAF). Residues Asn-1014 and Asn-1018 are each glycosylated (N-linked (GlcNAc...) asparagine). Residues 1051-1071 (IMLAMTIILCSVILVKFLAAL) traverse the membrane as a helical segment. Residue Asn-1416 is glycosylated (N-linked (GlcNAc...) asparagine). 3 consecutive transmembrane segments (helical) span residues 1441–1461 (FVVF…IYLG), 1474–1494 (FPII…LIFI), and 1502–1522 (IGWM…LPIY). Asn-1529 and Asn-1617 each carry an N-linked (GlcNAc...) asparagine glycan. The tract at residues 1659–1724 (THDINRGQTP…SFDFQRGNMQ (66 aa)) is disordered. Positions 1664 to 1688 (RGQTPFQDFPSSRPSVSNLRGQANP) are enriched in polar residues. A glycan (N-linked (GlcNAc...) asparagine) is linked at Asn-1695. Residues 1725-1781 (GPDDSMIIEAIQGVLREVDLDTVTKKQVRALVEQRLQTGLVGERRTFMDRQIDNELA) form the DEK-C domain.

The protein belongs to the chitin synthase family. Class V subfamily.

The protein resides in the cell membrane. It catalyses the reaction [(1-&gt;4)-N-acetyl-beta-D-glucosaminyl](n) + UDP-N-acetyl-alpha-D-glucosamine = [(1-&gt;4)-N-acetyl-beta-D-glucosaminyl](n+1) + UDP + H(+). Polymerizes chitin, a structural polymer of the cell wall and septum, by transferring the sugar moiety of UDP-GlcNAc to the non-reducing end of the growing chitin polymer. Responsible for about 29% of the chitin in conidial walls, is essential for conidial wall strength in media with high water potential and contributes to strength of hyphal tips. The sequence is that of Chitin synthase A from Colletotrichum graminicola (Maize anthracnose fungus).